Consider the following 320-residue polypeptide: ATP-dependent 6-phosphofructokinase (320 aa).

Position 12 (glycine 12) interacts with ATP. 22–26 (RGVVR) contacts ADP. ATP is bound by residues 73 to 74 (RF) and 103 to 106 (GDGS). Aspartate 104 is a binding site for Mg(2+). Position 126–128 (126–128 (TID)) interacts with substrate. Aspartate 128 (proton acceptor) is an active-site residue. Residue arginine 155 coordinates ADP. Substrate-binding positions include arginine 163 and 170 to 172 (MGR). Residues 186-188 (GCE), lysine 212, and 214-216 (KKH) each bind ADP. Residues glutamate 223, arginine 244, and 250-253 (HIQR) contribute to the substrate site.

The protein belongs to the phosphofructokinase type A (PFKA) family. ATP-dependent PFK group I subfamily. Prokaryotic clade 'B1' sub-subfamily. In terms of assembly, homotetramer. Mg(2+) is required as a cofactor.

Its subcellular location is the cytoplasm. The enzyme catalyses beta-D-fructose 6-phosphate + ATP = beta-D-fructose 1,6-bisphosphate + ADP + H(+). The protein operates within carbohydrate degradation; glycolysis; D-glyceraldehyde 3-phosphate and glycerone phosphate from D-glucose: step 3/4. Allosterically activated by ADP and other diphosphonucleosides, and allosterically inhibited by phosphoenolpyruvate. In terms of biological role, catalyzes the phosphorylation of D-fructose 6-phosphate to fructose 1,6-bisphosphate by ATP, the first committing step of glycolysis. The protein is ATP-dependent 6-phosphofructokinase of Aliivibrio fischeri (strain ATCC 700601 / ES114) (Vibrio fischeri).